The sequence spans 47 residues: PhoP/PhoQ regulator MgrB (47 aa).

A helical membrane pass occupies residues Trp-6 to Met-26.

This sequence belongs to the MgrB family. As to quaternary structure, may form homooligomers. Probably interacts with the periplasmic domain of PhoQ.

It localises to the cell inner membrane. In terms of biological role, phoP-regulated transcription is redox-sensitive, being activated when the periplasm becomes more reducing. MgrB acts between DsbA/DsbB and PhoP/PhoQ in this pathway. Represses PhoP/PhoQ signaling, possibly by binding to the periplasmic domain of PhoQ, altering its activity and that of downstream effector PhoP. The chain is PhoP/PhoQ regulator MgrB from Escherichia coli O1:K1 / APEC.